We begin with the raw amino-acid sequence, 541 residues long: Imidazole glycerol phosphate synthase hisHF (541 aa).

The region spanning 2-214 is the Glutamine amidotransferase type-1 domain; it reads IVSIVDYGSG…LTGNYEQPIS (213 aa). Active-site for GATase activity residues include C80, H189, and E191. Positions 228–541 are cyclase; it reads LTKRIIACLD…LAIHDVLVRT (314 aa). Catalysis depends on residues D237 and D396.

In the C-terminal section; belongs to the HisA/HisF family.

The enzyme catalyses 5-[(5-phospho-1-deoxy-D-ribulos-1-ylimino)methylamino]-1-(5-phospho-beta-D-ribosyl)imidazole-4-carboxamide + L-glutamine = D-erythro-1-(imidazol-4-yl)glycerol 3-phosphate + 5-amino-1-(5-phospho-beta-D-ribosyl)imidazole-4-carboxamide + L-glutamate + H(+). It catalyses the reaction L-glutamine + H2O = L-glutamate + NH4(+). The protein operates within amino-acid biosynthesis; L-histidine biosynthesis; L-histidine from 5-phospho-alpha-D-ribose 1-diphosphate: step 5/9. In terms of biological role, IGPS catalyzes the conversion of PRFAR and glutamine to IGP, AICAR and glutamate. The glutaminase domain produces the ammonia necessary for the cyclase domain to produce IGP and AICAR from PRFAR. The ammonia is channeled to the active site of the cyclase domain. This Schizosaccharomyces pombe (strain 972 / ATCC 24843) (Fission yeast) protein is Imidazole glycerol phosphate synthase hisHF (his4).